The primary structure comprises 1218 residues: Formin-A (1218 aa).

The region spanning 1–108 (MADKLYQIKL…ILGEACNYSV (108 aa)) is the C2 domain. The GBD/FH3 domain maps to 139-539 (EEKKRHDEIQ…QISLRDKNIG (401 aa)). Positions 563–638 (LKSQIESLKK…QLKLTQGTAK (76 aa)) form a coiled coil. The segment at 634 to 762 (QGTAKPDSAA…KAAAPPRKEV (129 aa)) is disordered. Pro residues predominate over residues 649-747 (APPPPPPPMT…FGKGPPPPPG (99 aa)). One can recognise an FH1 domain in the interval 652–737 (PPPPPMTGGG…AGGPPPPPPP (86 aa)). The FH2 domain maps to 759–1155 (RKEVPVPALK…IAKREAAKKL (397 aa)). The stretch at 1034 to 1061 (SLSQVQAEVATLRKEFVQVQKSIETLNS) forms a coiled coil. Disordered regions lie at residues 1153–1179 (KKLK…TVEV) and 1198–1218 (KNRR…PIDL). The 36-residue stretch at 1174–1209 (GETVEVKESVVDDLLDTIASGDAFKNRRRRARKTDQ) folds into the DAD domain.

This sequence belongs to the formin homology family. Diaphanous subfamily. As to quaternary structure, interacts (via GBD/FH3 domain) with activated Rho-GTPases.

In terms of biological role, formins play an important role in the nucleation of actin and the formation of linear actin filaments. In Dictyostelium discoideum (Social amoeba), this protein is Formin-A (forA).